We begin with the raw amino-acid sequence, 331 residues long: Mucin-15 (331 aa).

An N-terminal signal peptide occupies residues 1–22 (MLTLAKIALISSLFISLPFARP). Residues 23 to 233 (QKQNPRRNVT…SDTPKENKNT (211 aa)) are Extracellular-facing. N-linked (GlcNAc...) asparagine glycosylation is found at Asn30, Asn44, Asn54, Asn59, Asn75, Asn84, Asn120, Asn136, Asn145, Asn152, Asn215, and Asn222. A compositionally biased stretch (polar residues) spans 124–162 (ADANPLQVSEHSNSTNSPSPENFTWSLDNDTMNSPEDIS). Residues 124–186 (ADANPLQVSE…VTPFTAEPTE (63 aa)) are disordered. Residues 234 to 254 (GIVFGAILGAILGASLLSLVG) form a helical membrane-spanning segment. The Cytoplasmic portion of the chain corresponds to 255-331 (YLLCGQRKTD…DAIPPLRPSI (77 aa)). Residues 302–331 (AVSDSSMPEGGESLQDGIPMDAIPPLRPSI) form a disordered region.

Post-translationally, highly glycosylated (N- and O-linked carbohydrates).

The protein resides in the membrane. The protein is Mucin-15 (Muc15) of Mus musculus (Mouse).